The chain runs to 161 residues: Putative ecotin-like protein (161 aa).

The first 24 residues, 1 to 24, serve as a signal peptide directing secretion; sequence MSLRPIETAIASLTMLMLQGCAHA.

Belongs to the protease inhibitor I11 (ecotin) family.

The sequence is that of Putative ecotin-like protein from Methylobacillus flagellatus (strain ATCC 51484 / DSM 6875 / VKM B-1610 / KT).